The primary structure comprises 1205 residues: Transcriptional-regulating factor 1 (1205 aa).

Disordered stretches follow at residues 201–226, 270–317, 332–351, 390–500, 527–583, and 601–629; these read YQQV…VGQH, YPQP…QRQS, QHLQ…SYHR, PQSH…QTKG, LNGH…PEAE, and PKPS…MSDD. 2 stretches are compositionally biased toward low complexity: residues 291–317 and 332–342; these read QQQQ…QRQS and QHLQEQQQPSM. Composition is skewed to polar residues over residues 406–417, 437–447, and 487–498; these read KTYSSDRQTPAM, SEMTRVTSTLP, and QSGSPESSSGQT. A Phosphoserine modification is found at serine 490. The C2H2-type 1 zinc-finger motif lies at 512 to 534; sequence LTCSICLKEFKSLPALNGHMRSH. Positions 551–579 are enriched in pro residues; sequence APPPQPQPQPQPQQPLPPPPPPPPPPQLP. Residues 604–613 show a composition bias toward polar residues; the sequence is SSQGFTNSVA. N6-acetyllysine is present on residues lysine 639 and lysine 646. Threonine 773 carries the phosphothreonine modification. An ELM2 domain is found at 785 to 876; that stretch reads PRINIGLRFQ…ATLEMLLLRK (92 aa). The 52-residue stretch at 891-942 folds into the SANT domain; the sequence is AGSDKWTSLERKLFNKALATYSKDFIFVQKMVKSKTVAQCVEYYYTWKKIMR. A compositionally biased stretch (acidic residues) spans 956–975; the sequence is DDCMTSEEEEEAEEEEEDPE. Disordered regions lie at residues 956-1016 and 1043-1087; these read DDCM…QQPS and HGGT…GETD. Threonine 960 is modified (phosphothreonine). Serine 961 carries the post-translational modification Phosphoserine. The span at 976 to 990 shows a compositional bias: basic and acidic residues; the sequence is EDRKSIKEEESEVAK. A C2H2-type 2 zinc finger spans residues 1019–1043; sequence FICEMPNCGAVFSSRQALNGHARIH. A compositionally biased stretch (low complexity) spans 1072 to 1086; it reads SVKSSPSHSTTSGET. A C2H2-type 3 zinc finger spans residues 1092 to 1114; it reads FPCKECGKVFFKIKSRNAHMKTH.

In terms of assembly, interacts with CREBBP and EP300. Interacts with DNTTIP1 and DNTT. In terms of tissue distribution, highly expressed in kidney, lung and brain. In the brain, expression was seen in the basal ganglia, hippocampus, piriform cortex, cerebral cortex, ventromedial nucleus of the hypothalamus and the dorsal and superior central nuclei of the raphe.

The protein localises to the nucleus. Binds DNA and activates transcription of CYP11A1. Interaction with CREBBP and EP300 results in a synergistic transcriptional activation of CYP11A1. This is Transcriptional-regulating factor 1 (Trerf1) from Mus musculus (Mouse).